A 207-amino-acid chain; its full sequence is Probable GTP-binding protein EngB (207 aa).

In terms of domain architecture, EngB-type G spans 24 to 199 (GGYEVAFAGR…RAIVGAWLGL (176 aa)). GTP-binding positions include 32–39 (GRSNAGKS), 59–63 (GRTQQ), 77–80 (DLPG), 144–147 (TKAD), and 178–180 (YSG). Mg(2+) is bound by residues Ser39 and Thr61.

It belongs to the TRAFAC class TrmE-Era-EngA-EngB-Septin-like GTPase superfamily. EngB GTPase family. It depends on Mg(2+) as a cofactor.

Necessary for normal cell division and for the maintenance of normal septation. This is Probable GTP-binding protein EngB from Xanthomonas euvesicatoria pv. vesicatoria (strain 85-10) (Xanthomonas campestris pv. vesicatoria).